The sequence spans 114 residues: Gamma-glutamylcyclotransferase family protein ytfP (114 aa).

Belongs to the gamma-glutamylcyclotransferase family.

Its subcellular location is the cytoplasm. Functionally, may play a role in antibiotic biosynthesis. In Citrobacter rodentium (strain ICC168) (Citrobacter freundii biotype 4280), this protein is Gamma-glutamylcyclotransferase family protein ytfP (ytfP).